A 101-amino-acid polypeptide reads, in one-letter code: Ubiquitin-related modifier 1 homolog (101 aa).

At glycine 101 the chain carries 1-thioglycine. Glycine 101 participates in a covalent cross-link: Glycyl lysine isopeptide (Gly-Lys) (interchain with K-? in acceptor proteins).

It belongs to the URM1 family. Interacts with cer. Post-translationally, C-terminal thiocarboxylation occurs in 2 steps, it is first acyl-adenylated (-COAMP) via the hesA/moeB/thiF part of the MOCS3 homolog, then thiocarboxylated (-COSH) via the rhodanese domain of the MOCS3 homolog.

It localises to the cytoplasm. The protein operates within tRNA modification; 5-methoxycarbonylmethyl-2-thiouridine-tRNA biosynthesis. Acts as a sulfur carrier required for 2-thiolation of mcm(5)S(2)U at tRNA wobble positions of cytosolic tRNA(Lys), tRNA(Glu) and tRNA(Gln). Serves as sulfur donor in tRNA 2-thiolation reaction by being thiocarboxylated (-COSH) at its C-terminus by MOCS3. The sulfur is then transferred to tRNA to form 2-thiolation of mcm(5)S(2)U. Also acts as a ubiquitin-like protein (UBL) that is covalently conjugated via an isopeptide bond to lysine residues of target proteins such as Prx2/Jafrac1, Ciao1, Eip71CD and GILT1. The thiocarboxylated form serves as substrate for conjugation and oxidative stress specifically induces the formation of UBL-protein conjugates. This Drosophila erecta (Fruit fly) protein is Ubiquitin-related modifier 1 homolog.